The chain runs to 298 residues: MDKNIIIGAMTALITPFKNGKVDEQSYARLIKRQIENGIDAVVPVGTTGESATLTHEEHRTCIEIAVETCKGTKVKVLAGAGSNATHEAVGLAKFAKEHGADGILSVVPYYNKPTQQGLYEHYKAIAQSVDIPVLLYNVPGRTGCEISTDTIIKLFRDCENIYGVKEASGNIDKCVDLLAHEPRMMLISGEDAINYPILSNGGKGVISVTSNLLPDMISALTHFALDENYKEAKKINDELYNINKILFCESNPIPIKTAMYLAGLIESLEFRLPLCSPSKENFAKIEEVMKKYKIKGF.

Residue T48 coordinates pyruvate. Catalysis depends on Y137, which acts as the Proton donor/acceptor. The active-site Schiff-base intermediate with substrate is the K166. I207 is a binding site for pyruvate.

It belongs to the DapA family. Homotetramer; dimer of dimers.

Its subcellular location is the cytoplasm. It carries out the reaction L-aspartate 4-semialdehyde + pyruvate = (2S,4S)-4-hydroxy-2,3,4,5-tetrahydrodipicolinate + H2O + H(+). The protein operates within amino-acid biosynthesis; L-lysine biosynthesis via DAP pathway; (S)-tetrahydrodipicolinate from L-aspartate: step 3/4. Functionally, catalyzes the condensation of (S)-aspartate-beta-semialdehyde [(S)-ASA] and pyruvate to 4-hydroxy-tetrahydrodipicolinate (HTPA). The protein is 4-hydroxy-tetrahydrodipicolinate synthase of Campylobacter jejuni subsp. jejuni serotype O:23/36 (strain 81-176).